We begin with the raw amino-acid sequence, 38 residues long: Photosystem II reaction center protein L (38 aa).

Residues 17–37 (SLYWGLLLIFVLAVLFSNYFF) form a helical membrane-spanning segment.

It belongs to the PsbL family. PSII is composed of 1 copy each of membrane proteins PsbA, PsbB, PsbC, PsbD, PsbE, PsbF, PsbH, PsbI, PsbJ, PsbK, PsbL, PsbM, PsbT, PsbX, PsbY, PsbZ, Psb30/Ycf12, at least 3 peripheral proteins of the oxygen-evolving complex and a large number of cofactors. It forms dimeric complexes.

It localises to the plastid. Its subcellular location is the chloroplast thylakoid membrane. Its function is as follows. One of the components of the core complex of photosystem II (PSII). PSII is a light-driven water:plastoquinone oxidoreductase that uses light energy to abstract electrons from H(2)O, generating O(2) and a proton gradient subsequently used for ATP formation. It consists of a core antenna complex that captures photons, and an electron transfer chain that converts photonic excitation into a charge separation. This subunit is found at the monomer-monomer interface and is required for correct PSII assembly and/or dimerization. The chain is Photosystem II reaction center protein L from Huperzia lucidula (Shining clubmoss).